We begin with the raw amino-acid sequence, 843 residues long: Glycogen phosphorylase, brain form (843 aa).

Alanine 2 is subject to N-acetylalanine. Serine 15 carries the post-translational modification Phosphoserine; by PHK; in form phosphorylase A. Aspartate 43, tyrosine 197, and arginine 310 together coordinate AMP. Tyrosine 197 bears the Phosphotyrosine mark. Residue tyrosine 473 is modified to Phosphotyrosine. Lysine 569 serves as a coordination point for pyridoxal 5'-phosphate. The interval 677–678 (TG) is pyridoxal 5'-phosphate. Lysine 681 carries the post-translational modification N6-(pyridoxal phosphate)lysine.

Belongs to the glycogen phosphorylase family. Homodimer. Dimers associate into a tetramer to form the enzymatically active phosphorylase A. Pyridoxal 5'-phosphate is required as a cofactor. Phosphorylation of Ser-15 converts phosphorylase B (unphosphorylated) to phosphorylase A.

The enzyme catalyses [(1-&gt;4)-alpha-D-glucosyl](n) + phosphate = [(1-&gt;4)-alpha-D-glucosyl](n-1) + alpha-D-glucose 1-phosphate. Its activity is regulated as follows. Activity of phosphorylase is controlled both by allosteric means (through the non-covalent binding of metabolites) and by covalent modification. Thus AMP allosterically activates, whereas ATP, ADP, and glucose-6-phosphate allosterically inhibit, phosphorylase B. In terms of biological role, glycogen phosphorylase that regulates glycogen mobilization. Phosphorylase is an important allosteric enzyme in carbohydrate metabolism. Enzymes from different sources differ in their regulatory mechanisms and in their natural substrates. However, all known phosphorylases share catalytic and structural properties. This chain is Glycogen phosphorylase, brain form (PYGB), found in Ovis aries (Sheep).